Here is a 219-residue protein sequence, read N- to C-terminus: Adenylate kinase (219 aa).

G12–T17 contributes to the ATP binding site. An NMP region spans residues S32–V61. Residues T33, R38, E59–V61, G87–R90, and Q94 contribute to the AMP site. Positions G128 to D165 are LID. R129 serves as a coordination point for ATP. Zn(2+) contacts are provided by C132, C135, C152, and C155. The AMP site is built by R162 and R174. A202 contributes to the ATP binding site.

Belongs to the adenylate kinase family. As to quaternary structure, monomer.

The protein localises to the cytoplasm. It carries out the reaction AMP + ATP = 2 ADP. It functions in the pathway purine metabolism; AMP biosynthesis via salvage pathway; AMP from ADP: step 1/1. In terms of biological role, catalyzes the reversible transfer of the terminal phosphate group between ATP and AMP. Plays an important role in cellular energy homeostasis and in adenine nucleotide metabolism. This chain is Adenylate kinase, found in Sphingopyxis alaskensis (strain DSM 13593 / LMG 18877 / RB2256) (Sphingomonas alaskensis).